A 46-amino-acid chain; its full sequence is MAERSLSGLTEEEAIAVHDQFKTTFSAFIILAAVAHVLVWVWKPWF.

The Cytoplasmic portion of the chain corresponds to 2 to 19 (AERSLSGLTEEEAIAVHD). The a bacteriochlorophyll site is built by histidine 18 and histidine 36. A helical transmembrane segment spans residues 20-42 (QFKTTFSAFIILAAVAHVLVWVW). The Periplasmic portion of the chain corresponds to 43–46 (KPWF).

This sequence belongs to the antenna complex beta subunit family. The core complex is formed by different alpha and beta chains, binding bacteriochlorophyll molecules, and arranged most probably in tetrameric structures disposed around the reaction center.

The protein localises to the cell inner membrane. Functionally, antenna complexes are light-harvesting systems, which transfer the excitation energy to the reaction centers. This chain is Light-harvesting protein B-800/850 beta 1 chain (B1), found in Magnetospirillum molischianum (Rhodospirillum molischianum).